We begin with the raw amino-acid sequence, 158 residues long: SsrA-binding protein (158 aa).

The protein belongs to the SmpB family.

It is found in the cytoplasm. Required for rescue of stalled ribosomes mediated by trans-translation. Binds to transfer-messenger RNA (tmRNA), required for stable association of tmRNA with ribosomes. tmRNA and SmpB together mimic tRNA shape, replacing the anticodon stem-loop with SmpB. tmRNA is encoded by the ssrA gene; the 2 termini fold to resemble tRNA(Ala) and it encodes a 'tag peptide', a short internal open reading frame. During trans-translation Ala-aminoacylated tmRNA acts like a tRNA, entering the A-site of stalled ribosomes, displacing the stalled mRNA. The ribosome then switches to translate the ORF on the tmRNA; the nascent peptide is terminated with the 'tag peptide' encoded by the tmRNA and targeted for degradation. The ribosome is freed to recommence translation, which seems to be the essential function of trans-translation. This Glaesserella parasuis serovar 5 (strain SH0165) (Haemophilus parasuis) protein is SsrA-binding protein.